Consider the following 230-residue polypeptide: DNA repair protein RecO (230 aa).

This sequence belongs to the RecO family.

Involved in DNA repair and RecF pathway recombination. This chain is DNA repair protein RecO, found in Pseudoalteromonas translucida (strain TAC 125).